Consider the following 490-residue polypeptide: Nicotinate phosphoribosyltransferase (490 aa).

Histidine 206 carries the post-translational modification Phosphohistidine.

The protein belongs to the NAPRTase family. Transiently phosphorylated on a His residue during the reaction cycle. Phosphorylation strongly increases the affinity for substrates and increases the rate of nicotinate D-ribonucleotide production. Dephosphorylation regenerates the low-affinity form of the enzyme, leading to product release.

It carries out the reaction nicotinate + 5-phospho-alpha-D-ribose 1-diphosphate + ATP + H2O = nicotinate beta-D-ribonucleotide + ADP + phosphate + diphosphate. The protein operates within cofactor biosynthesis; NAD(+) biosynthesis; nicotinate D-ribonucleotide from nicotinate: step 1/1. Its function is as follows. Catalyzes the synthesis of beta-nicotinate D-ribonucleotide from nicotinate and 5-phospho-D-ribose 1-phosphate at the expense of ATP. This is Nicotinate phosphoribosyltransferase (pncB) from Bacillus subtilis (strain 168).